The primary structure comprises 103 residues: uncharacterized protein (103 aa).

This is an uncharacterized protein from Haemophilus influenzae (strain ATCC 51907 / DSM 11121 / KW20 / Rd).